We begin with the raw amino-acid sequence, 923 residues long: Progesterone receptor (923 aa).

Residues 1–11 (MTELQAKDPRT) show a composition bias toward basic and acidic residues. Residues 1–49 (MTELQAKDPRTLHTSGAAPSPTHVGSPLLARLDPDPFQGSQHSDASSVV) form a disordered region. Positions 1-164 (MTELQAKDPR…PATKGLLSPL (164 aa)) are AF3; mediates transcriptional activation (in isoform B). The segment at 1–556 (MTELQAKDPR…YGFDSLPQKI (556 aa)) is modulating, Pro-Rich. K7 is covalently cross-linked (Glycyl lysine isopeptide (Lys-Gly) (interchain with G-Cter in SUMO)). S20 is subject to Phosphoserine. A compositionally biased stretch (polar residues) spans 38–49 (QGSQHSDASSVV). An LXXL motif 1 motif is present at residues 56–60 (LDRLL). Residues 67–111 (AQELPDEKTQNQQSLSDVEGAFSGVEASRRRSRNPRAPEKDSRLL) form a disordered region. Phosphoserine is present on S82. The LXXL motif 2 signature appears at 115-119 (LDTLL). S130 and S162 each carry phosphoserine. Positions 152–239 (RSVPATKGLL…EGSAGPLLKS (88 aa)) are disordered. The segment at 165–304 (MSRPESKAGD…LATTVVDFIH (140 aa)) is mediates transcriptional transrepression (in isoform A). The Nuclear localization signal signature appears at 184–188 (VLPKA). 2 positions are modified to phosphoserine: S190 and S213. The residue at position 293 (S293) is a Phosphoserine; by MAPK1. Positions 333–371 (AAQVPFAPPRGSPSAPSPPVPCGDFPDCTYPPEGDPKED) are disordered. A compositionally biased stretch (pro residues) spans 338–353 (FAPPRGSPSAPSPPVP). A Phosphoserine; by MAPK modification is found at S344. Residue K387 forms a Glycyl lysine isopeptide (Lys-Gly) (interchain with G-Cter in SUMO); alternate linkage. K387 participates in a covalent cross-link: Glycyl lysine isopeptide (Lys-Gly) (interchain with G-Cter in ubiquitin); alternate. Phosphoserine; by CDK2 is present on S399. Positions 412 to 435 (TFPDFPLPPRPPRAPPSRPGEAAV) are disordered. Pro residues predominate over residues 416–429 (FPLPPRPPRAPPSR). Residues 450–536 (SALECILYKA…VYPPYLNYLR (87 aa)) form an AF1; mediates transcriptional activation region. K521 participates in a covalent cross-link: Glycyl lysine isopeptide (Lys-Gly) (interchain with G-Cter in SUMO). 2 NR C4-type zinc fingers span residues 557-577 (CLICGDEASGCHYGVLTCGSC) and 593-617 (CAGRNDCIVDKIRRKNCPACRLRKC). A DNA-binding region (nuclear receptor) is located at residues 557-629 (CLICGDEASG…AGMVLGGRKF (73 aa)). S666 is subject to Phosphoserine. Residues 669-903 (QEIQLVPPLI…EFPEMMSEVI (235 aa)) form the NR LBD domain. An AF2; mediates transcriptional activation region spans residues 677–923 (LINLLMSIEP…MVKPLLFHKK (247 aa)). A progesterone-binding site is contributed by R756.

Belongs to the nuclear hormone receptor family. NR3 subfamily. As to quaternary structure, interacts with SMARD1 and UNC45A. Interacts with CUEDC2; the interaction promotes ubiquitination, decreases sumoylation, and represses transcriptional activity. Interacts with PIAS3; the interaction promotes sumoylation of PR in a hormone-dependent manner, inhibits DNA-binding, and alters nuclear export. Interacts with SP1; the interaction requires ligand-induced phosphorylation on Ser-344. Interacts with PRMT2. Isoform A interacts with NCOR2. Isoform B (but not isoform A) interacts with NCOA2 and NCOA1. Isoform B (but not isoform A) interacts with KLF9. Interacts with GTF2B. Phosphorylated on multiple serine sites. Several of these sites are hormone-dependent. Phosphorylation on Ser-293 is highly hormone-dependent and modulates ubiquitination and sumoylation on Lys-387. Phosphorylation on Ser-344 also requires induction by hormone. Basal phosphorylation on Ser-82, Ser-190 and Ser-399 is increased in response to progesterone and can be phosphorylated in vitro by the CDK2-A1 complex. Increased levels of phosphorylation on Ser-399 also in the presence of EGF, heregulin, IGF, PMA and FBS. Phosphorylation at this site by CDK2 is ligand-independent, and increases nuclear translocation and transcriptional activity. Phosphorylation at Ser-293, but not at Ser-190, is impaired during the G(2)/M phase of the cell cycle. Phosphorylation on Ser-344 by ERK1/2 MAPK is required for interaction with SP1. Post-translationally, sumoylation is hormone-dependent and represses transcriptional activity. Sumoylation on all three sites is enhanced by PIAS3. Desumoylated by SENP1. Sumoylation on Lys-387, the main site of sumoylation, is repressed by ubiquitination on the same site, and modulated by phosphorylation at Ser-293. In terms of processing, ubiquitination is hormone-dependent and represses sumoylation on the same site. Promoted by MAPK-mediated phosphorylation on Ser-293. Ubiquitinated by UBR5, leading to its degradation: UBR5 specifically recognizes and binds ligand-bound PGR when it is not associated with coactivators (NCOAs). In presence of NCOAs, the UBR5-degron is not accessible, preventing its ubiquitination and degradation. Palmitoylated by ZDHHC7 and ZDHHC21. Palmitoylation is required for plasma membrane targeting and for rapid intracellular signaling via ERK and AKT kinases and cAMP generation. Isoform A and isoform B are expressed in the pituitary.

Its subcellular location is the nucleus. It localises to the cytoplasm. Functionally, the steroid hormones and their receptors are involved in the regulation of eukaryotic gene expression and affect cellular proliferation and differentiation in target tissues. Depending on the isoform, progesterone receptor functions as a transcriptional activator or repressor. Ligand-dependent transdominant repressor of steroid hormone receptor transcriptional activity including repression of its isoform B, MR and ER. Transrepressional activity may involve recruitment of corepressor NCOR2. In terms of biological role, transcriptional activator of several progesteron-dependent promoters in a variety of cell types. Involved in activation of SRC-dependent MAPK signaling on hormone stimulation. The chain is Progesterone receptor (Pgr) from Rattus norvegicus (Rat).